The chain runs to 411 residues: SKA complex subunit 3 (411 aa).

Residues Ser34, Ser119, Ser138, Ser154, and Ser158 each carry the phosphoserine modification. Residues 102 to 410 (YQARDKEDSG…GTRGAANKEN (309 aa)) form a binds the NDC80 complex region. A phosphothreonine mark is found at Thr189 and Thr216. Positions 195–410 (PSVQVLKTPR…GTRGAANKEN (216 aa)) are binds microtubules and contacts the microtubule-binding domain of SKA1. Ser289 bears the Phosphoserine mark. At Thr297 the chain carries Phosphothreonine. 2 positions are modified to phosphoserine: Ser324 and Ser352. Residues 349–410 (EPPSSAITSC…GTRGAANKEN (62 aa)) are required for localization to kinetochores. A Phosphothreonine modification is found at Thr363.

This sequence belongs to the SKA3 family. Component of the SKA complex, composed of SKA1, SKA2 and SKA3. The SKA complex is a homodimer organized around a central W-shaped coiled-coil structure, formed by the interacting domains of SKA1, SKA2, and SKA3, each end of the 'W' is extended further by the C-terminal microtubule-binding domains of SKA1 and SKA3; the complex forms extended structures on microtubules. Interacts with the NDC80-NUF2 heterodimer of the NDC80 complex (via coiled coils); the interaction localizes the SKA complex to the kinetochore and is required to establish kinetochore-microtubule end-on attachments. Interacts with polo-like kinase PLK1.

The protein resides in the cytoplasm. The protein localises to the cytoskeleton. It localises to the spindle. It is found in the chromosome. Its subcellular location is the centromere. The protein resides in the kinetochore. The protein localises to the microtubule organizing center. It localises to the centrosome. Component of the SKA complex, a microtubule plus end-binding complex of the outer kinetochore that stabilizes spindle microtubule-kinetochore attachments, promotes alignment of chromosomes at the mitotic spindle equator (chromosome congression) and assists suppression of the spindle assembly checkpoint. Kinetochores, consisting of a centromere-associated inner segment and a microtubule-contacting outer segment, play a crucial role in chromosome segregation by mediating the physical connection between centromeric DNA and spindle microtubules. The outer kinetochore is made up of the ten-subunit KMN network complex, comprising the MIS12, NDC80 and KNL1 complexes, and auxiliary microtubule-associated components such as the SKA complex; together they connect the outer kinetochore with the inner kinetochore, bind microtubules, and mediate interactions with mitotic checkpoint proteins that delay anaphase until chromosomes are bioriented on the spindle. The SKA complex is loaded onto bioriented kinetochores and it facilitates chromosome congression by stabilizing microtubules together with MAPRE1, and end-on attachment of the NDC80 complex to depolymerizing spindle microtubules, thereby assisting the poleward-moving kinetochore in withstanding microtubule pulling forces. The complex associates with dynamic microtubule plus-ends and can track both depolymerizing and elongating microtubules. The complex recruits protein phosphatase 1 (PP1) to the kinetochore in prometaphase and metaphase, to oppose spindle assembly checkpoint signaling and promote the onset of anaphase. Within the complex, binds microtubules but with a much lower affinity than SKA1. Promotes stability of the polo-like kinase PLK1 protein. During meiosis the SKA complex stabilizes the meiotic spindle and is required for its migration to the cortex. This is SKA complex subunit 3 (Ska3) from Mus musculus (Mouse).